Reading from the N-terminus, the 208-residue chain is Putative dioxygenase RC0543 (208 aa).

It belongs to the intradiol ring-cleavage dioxygenase family.

This Rickettsia conorii (strain ATCC VR-613 / Malish 7) protein is Putative dioxygenase RC0543.